Reading from the N-terminus, the 496-residue chain is MSDHQDGMKLEDIERQFLDVAQREGGLEAIQPTTGPLENEENLKSSTGGGGGEDDNDRKKRKRSRSRDRDTRRRSRSRDRGERRGGGGGGDRDRSRSRERRRGGGGRDEPRRRGGDDEARSRREPEPQKPREPKKYRFWDVPPTGFETTTPMEYKNMQAAGQVPRGSVQSAVPVVGPSVTCQSRRLYVGNIPFGCNEEAMLDFFNQQMHLCGLAQAPGNPILLCQINLDKNFAFIEFRSIDETTAGMAFDGINFMGQQLKVRRPRDYQPSQNTFDMNSRMPVSTIVVDSANKIFIGGLPNYLTEDQVKELLCSFGPLKAFSLNVDSQGNSKGYAFAEYLDPTLTDQAIAGLNGMQLGDKQLVVQLACANQQRHNTNLPNSASAIAGIDLSQGAGRATEILCLMNMVTEDELKADDEYEEILEDVRDECSKYGIVRSLEIPRPYEDHPVPGVGKVFVEFASTSDCQRAQAALTGRKFANRTVVTSYYDVDKYHNRQF.

A compositionally biased stretch (basic and acidic residues) spans Met-1 to Gly-26. Residues Met-1 to Pro-142 form a disordered region. Positions Lys-59–Ser-77 are enriched in basic residues. Basic and acidic residues-rich tracts occupy residues Arg-78–Arg-96 and Gly-105–Phe-138. RRM domains are found at residues Arg-184–Asp-266, Asn-291–Ala-368, and Asn-404–Val-488.

In terms of assembly, forms a heterodimer with the U2AF small subunit.

The protein resides in the nucleus. Functionally, necessary for the splicing of pre-mRNA. Binds to the polypyrimidine tract of introns early during spliceosome assembly. The sequence is that of Splicing factor U2AF 65 kDa subunit (uaf-1) from Caenorhabditis elegans.